Reading from the N-terminus, the 81-residue chain is Trefoil factor 3 (81 aa).

An N-terminal signal peptide occupies residues 1 to 22 (METRALWLMLLVVLVAGSSGIA). A P-type domain is found at 31–74 (SQCMVPANVRVDCGYPSVTSEQCNNRGCCFDSSIPNVPWCFKPL). 3 disulfide bridges follow: Cys-33-Cys-59, Cys-43-Cys-58, and Cys-53-Cys-70.

As to quaternary structure, monomer. Homodimer; disulfide-linked. As to expression, expressed in goblet cells of the intestines and colon (at protein level). Expressed abundantly in goblet cells of intestine and colon, and at low levels in stomach. No expression in brain, lung, spleen, kidney, uterus, pancreas, liver, heart or thymus.

It localises to the secreted. The protein resides in the extracellular space. It is found in the extracellular matrix. The protein localises to the cytoplasm. Involved in the maintenance and repair of the intestinal mucosa. Promotes the mobility of epithelial cells in healing processes (motogen). The chain is Trefoil factor 3 (Tff3) from Mus musculus (Mouse).